The sequence spans 50 residues: uncharacterized protein (50 aa).

It is found in the mitochondrion. This is an uncharacterized protein from Saccharomyces cerevisiae (strain ATCC 204508 / S288c) (Baker's yeast).